The primary structure comprises 385 residues: Putative type I restriction enzyme specificity subunit S.HindORF215P (385 aa).

It belongs to the type-I restriction system S methylase family.

Functionally, a putative specificity subunit for a type I restriction enzyme; the corresponding endonuclease and methylase subunits have multiple frameshifts and are probably not expressed. The polypeptide is Putative type I restriction enzyme specificity subunit S.HindORF215P (Haemophilus influenzae (strain ATCC 51907 / DSM 11121 / KW20 / Rd)).